Reading from the N-terminus, the 551-residue chain is Hydroxylamine reductase (551 aa).

Residues Cys3, Cys6, Cys18, and Cys25 each coordinate [2Fe-2S] cluster. His249, Glu273, Cys317, Cys405, Cys433, Cys459, Glu493, and Lys495 together coordinate hybrid [4Fe-2O-2S] cluster. At Cys405 the chain carries Cysteine persulfide.

Belongs to the HCP family. [2Fe-2S] cluster is required as a cofactor. It depends on hybrid [4Fe-2O-2S] cluster as a cofactor.

It is found in the cytoplasm. It carries out the reaction A + NH4(+) + H2O = hydroxylamine + AH2 + H(+). Catalyzes the reduction of hydroxylamine to form NH(3) and H(2)O. The polypeptide is Hydroxylamine reductase (Actinobacillus pleuropneumoniae serotype 7 (strain AP76)).